The primary structure comprises 77 residues: U8-lycotoxin-Ls1b (77 aa).

Residues M1–A20 form the signal peptide. Positions Q21–K26 are excised as a propeptide.

The protein belongs to the neurotoxin 19 (CSTX) family. 08 (U8-Lctx) subfamily. Contains 4 disulfide bonds. Expressed by the venom gland.

The protein resides in the secreted. In Lycosa singoriensis (Wolf spider), this protein is U8-lycotoxin-Ls1b.